Reading from the N-terminus, the 411-residue chain is S-adenosylmethionine synthase (411 aa).

H15 contacts ATP. A Mg(2+)-binding site is contributed by D17. Residue E43 participates in K(+) binding. L-methionine-binding residues include E56 and Q99. The flexible loop stretch occupies residues 99–109 (QSPDIAQGVDT). ATP is bound by residues 174–176 (DGK), 247–248 (RF), D256, 262–263 (RK), A279, and K283. D256 contributes to the L-methionine binding site. K287 is a binding site for L-methionine.

This sequence belongs to the AdoMet synthase family. As to quaternary structure, homotetramer; dimer of dimers. It depends on Mg(2+) as a cofactor. K(+) is required as a cofactor.

It is found in the cytoplasm. It catalyses the reaction L-methionine + ATP + H2O = S-adenosyl-L-methionine + phosphate + diphosphate. It functions in the pathway amino-acid biosynthesis; S-adenosyl-L-methionine biosynthesis; S-adenosyl-L-methionine from L-methionine: step 1/1. Catalyzes the formation of S-adenosylmethionine (AdoMet) from methionine and ATP. The overall synthetic reaction is composed of two sequential steps, AdoMet formation and the subsequent tripolyphosphate hydrolysis which occurs prior to release of AdoMet from the enzyme. The protein is S-adenosylmethionine synthase of Streptomyces spectabilis.